A 1232-amino-acid polypeptide reads, in one-letter code: Anion exchange protein 3 (1232 aa).

The span at 1 to 11 (MANGVIPPPGG) shows a compositional bias: pro residues. Disordered regions lie at residues 1–316 (MANG…KLDR) and 429–499 (NDDK…DSHR). Residues 1-708 (MANGVIPPPG…DLRDALHSQC (708 aa)) are Cytoplasmic-facing. Residues 58–75 (DPEKPSRSYSERDFEFHR) are compositionally biased toward basic and acidic residues. Basic residues-rich tracts occupy residues 76 to 97 (HTSHHTHHPLSARLPPPHKLRR) and 104 to 113 (RHTRRKRKKE). A compositionally biased stretch (acidic residues) spans 134-152 (VDEEEEEEEEEEGESEAEP). Phosphoserine is present on residues serine 167, serine 170, serine 175, and serine 198. A compositionally biased stretch (basic and acidic residues) spans 267-279 (DDMKSHRLEDNPG). Residues 280-289 (VRRHLVKKPS) show a composition bias toward basic residues. An Omega-N-methylarginine modification is found at arginine 295. Basic residues predominate over residues 305 to 316 (LRRKKKKKKLDR). Residues 440–450 (NPSSSSMNSVL) are compositionally biased toward polar residues. Basic and acidic residues predominate over residues 481–499 (HDPDAKEKPLHMPGGDSHR). The next 5 helical transmembrane spans lie at 709–731 (VAAVLFIYFAALSPAITFGGLLG), 737–774 (LMGVSELIVSTAVLGVLFSLLGAQPLLVVGFSGPLLVF), 794–816 (VWVGLWLVVFVLALVAAEGSFLV), 826–847 (IFAFLISLIFIYETFYKLYKVF), and 893–910 (ALLSLILMLGTFFIAFFL). Residues 709-1232 (VAAVLFIYFA…DEYNELHMPV (524 aa)) are membrane (anion exchange). At 911–925 (RKFRNSRFLGGKARR) the chain is on the cytoplasmic side. 5 helical membrane passes run 926–946 (IIGDFGIPISILVMVLVDYSI), 980–1002 (PFPPWMMVAAAVPALLVLILIFM), 1028–1049 (LLLIGSLGGLCGLFGLPWLTAA), 1083–1128 (VTGV…IQLS), and 1155–1191 (MHLFTCIQLGCIALLWVVKSTAASLAFPFLLLLTVPL). Cysteine 1165 is lipidated: S-palmitoyl cysteine.

This sequence belongs to the anion exchanger (TC 2.A.31) family.

The protein localises to the cell membrane. The catalysed reaction is hydrogencarbonate(in) + chloride(out) = hydrogencarbonate(out) + chloride(in). Functionally, sodium-independent anion exchanger which mediates the electroneutral exchange of chloride for bicarbonate ions across the cell membrane. May be involved in the regulation of intracellular pH, and the modulation of cardiac action potential. The protein is Anion exchange protein 3 (SLC4A3) of Plecturocebus moloch (Dusky titi monkey).